Reading from the N-terminus, the 336-residue chain is Dihydroorotate dehydrogenase (quinone) (336 aa).

FMN-binding positions include 62 to 66 (AGLDK) and Thr86. Residue Lys66 participates in substrate binding. Residue 111 to 115 (NRMGF) coordinates substrate. 2 residues coordinate FMN: Asn139 and Asn172. Asn172 provides a ligand contact to substrate. Catalysis depends on Ser175, which acts as the Nucleophile. Asn177 provides a ligand contact to substrate. Residues Lys217 and Thr245 each contribute to the FMN site. A substrate-binding site is contributed by 246 to 247 (NT). FMN contacts are provided by residues Gly268, Gly297, and 318 to 319 (YS).

This sequence belongs to the dihydroorotate dehydrogenase family. Type 2 subfamily. In terms of assembly, monomer. The cofactor is FMN.

The protein resides in the cell membrane. It catalyses the reaction (S)-dihydroorotate + a quinone = orotate + a quinol. It participates in pyrimidine metabolism; UMP biosynthesis via de novo pathway; orotate from (S)-dihydroorotate (quinone route): step 1/1. Catalyzes the conversion of dihydroorotate to orotate with quinone as electron acceptor. The chain is Dihydroorotate dehydrogenase (quinone) from Shigella dysenteriae serotype 1 (strain Sd197).